A 173-amino-acid polypeptide reads, in one-letter code: MAYIMLTLLIGMVLGVISVASNPSPYFAALGLVLVAGVGCVVLMGHGGSFLSLVLFLIYLGGMLVVFAYCAALAAEPYPEAWGEWSVLGSVLGYLLLVVGAGSWFWGGWYEGMWVPVDELIEFSVVAADSGGVALMYSLGGGLLVVSAWVLLLTLLVVLELTRGLARGALRAV.

5 helical membrane passes run 1 to 21, 25 to 45, 53 to 73, 87 to 107, and 139 to 159; these read MAYI…SVAS, PYFA…VLMG, LVLF…CAAL, VLGS…WFWG, and LGGG…LVVL.

It belongs to the complex I subunit 6 family.

The protein localises to the mitochondrion membrane. It carries out the reaction a ubiquinone + NADH + 5 H(+)(in) = a ubiquinol + NAD(+) + 4 H(+)(out). Functionally, core subunit of the mitochondrial membrane respiratory chain NADH dehydrogenase (Complex I) that is believed to belong to the minimal assembly required for catalysis. Complex I functions in the transfer of electrons from NADH to the respiratory chain. The immediate electron acceptor for the enzyme is believed to be ubiquinone. In Gadus morhua (Atlantic cod), this protein is NADH-ubiquinone oxidoreductase chain 6 (MT-ND6).